Consider the following 92-residue polypeptide: Large ribosomal subunit protein bL27 (92 aa).

Positions 1–9 are excised as a propeptide; that stretch reads MLVMNLQYF.

The protein belongs to the bacterial ribosomal protein bL27 family. In terms of processing, the N-terminus is cleaved by ribosomal processing cysteine protease Prp.

The sequence is that of Large ribosomal subunit protein bL27 from Heliobacterium modesticaldum (strain ATCC 51547 / Ice1).